The chain runs to 548 residues: (2S)-methylsuccinyl-CoA dehydrogenase (548 aa).

FAD contacts are provided by residues 282-291 and 315-317; these read AVFTEPNTGS and WIT. Ser291 contacts substrate. 409–412 is a binding site for substrate; it reads ESAR. Residues Arg437 and 505–509 each bind FAD; that span reads QIHGG. Glu532 functions as the Proton acceptor in the catalytic mechanism. 534–536 is an FAD binding site; the sequence is AAE.

This sequence belongs to the acyl-CoA dehydrogenase family. In terms of assembly, homodimer. FAD is required as a cofactor.

It catalyses the reaction (2S)-methylsuccinyl-CoA + oxidized [electron-transfer flavoprotein] + H(+) = 2-methylfumaryl-CoA + reduced [electron-transfer flavoprotein]. In terms of biological role, involved in the ethylmalonyl-CoA pathway, a new acetyl-CoA assimilation strategy that operates in a number of bacteria and replaces the glyoxylate cycle. Catalyzes the oxidation of (2S)-methylsuccinyl-CoA to yield mesaconyl-(C1)-CoA. Highly specific for (S)-methylsuccinyl-CoA. This Cereibacter sphaeroides (Rhodobacter sphaeroides) protein is (2S)-methylsuccinyl-CoA dehydrogenase.